Reading from the N-terminus, the 690-residue chain is Putative glycerophosphocholine phosphodiesterase GPCPD1 homolog 1 (690 aa).

In terms of domain architecture, CBM20 spans 1 to 122 (MDQDYKAHFK…RKNITDQFGS (122 aa)). In terms of domain architecture, GP-PDE spans 344–654 (MLQIGHRGMG…DRIGEDEVLK (311 aa)). The segment at 670–690 (ARSQHNSRSPSMSRRCMSTVE) is disordered. Positions 676–690 (SRSPSMSRRCMSTVE) are enriched in low complexity.

It belongs to the glycerophosphoryl diester phosphodiesterase family.

This Caenorhabditis elegans protein is Putative glycerophosphocholine phosphodiesterase GPCPD1 homolog 1.